We begin with the raw amino-acid sequence, 420 residues long: Glutaryl-CoA dehydrogenase, mitochondrial (420 aa).

125–126 (RS) is a substrate binding site. FAD is bound by residues 164–167 (FGLT), S173, and 198–200 (WIT). Residue S173 participates in substrate binding. Residues 273-277 (FSCLN) and R280 each bind substrate. E400 (proton acceptor) is an active-site residue. Positions 402 and 420 each coordinate FAD.

Belongs to the acyl-CoA dehydrogenase family. The cofactor is FAD.

The protein resides in the mitochondrion matrix. It carries out the reaction glutaryl-CoA + oxidized [electron-transfer flavoprotein] + 2 H(+) = (2E)-butenoyl-CoA + reduced [electron-transfer flavoprotein] + CO2. It participates in amino-acid metabolism; lysine degradation. Its pathway is amino-acid metabolism; tryptophan metabolism. This is Glutaryl-CoA dehydrogenase, mitochondrial (gcdh) from Dictyostelium discoideum (Social amoeba).